The primary structure comprises 54 residues: Apelin receptor early endogenous ligand (54 aa).

The signal sequence occupies residues 1 to 25 (MRFQPLFWVFFIFAMSLLFITEEKS).

This sequence belongs to the Elabela/Toddler family. As to quaternary structure, interacts with APLNR.

The protein resides in the secreted. Its subcellular location is the extracellular space. Peptide hormone that functions as endogenous ligand for the G-protein-coupled apelin receptor (APLNR/APJ), that plays a role in the regulation of normal cardiovascular function and fluid homeostasis. Functions as a balanced agonist activating both G(i) protein pathway and beta-arrestin pathway of APLNR. Downstream G proteins activation, apelin can inhibit cAMP production and activate key intracellular effectors such as ERKs. On the other hand, APLNR activation induces beta-arrestin recruitment to the membrane leading to desensitization and internalization of the receptor. Required for mesendodermal differentiation, blood vessels formation and heart morphogenesis during early development and for adult cardiovascular homeostasis. Acts as a motogen by promoting mesendodermal cell migration during gastrulation by binding and activating APLNR. Acts as an early embryonic regulator of cellular movement with a role in migration and development of cardiac progenitor cells. May act as a chemoattractant for the activation of angioblast migration toward the embryonic midline, i.e. the position of the future vessel formation, during vasculogenesis. Positively regulates sinus venosus (SV)-derived endothelial cells migration into the developing heart to promote coronary blood vessel sprouting. Plays a role in placental vascular development; promotes placental trophoblast invasion and spiral artery remodeling in the uterus. Involved in the regulation of maternal cardiovascular homeostasis to prevent gestational hypertension and for potent cardioprotective functions during heart failure. Mediates myocardial contractility in an ERK1/2-dependent manner. The polypeptide is Apelin receptor early endogenous ligand (Rattus norvegicus (Rat)).